The primary structure comprises 35 residues: Putative gastric cancer-related gene 224 protein (35 aa).

In terms of tissue distribution, expressed in gastric mucosa.

The chain is Putative gastric cancer-related gene 224 protein (GCRG224) from Homo sapiens (Human).